The primary structure comprises 474 residues: Protein anachronism (474 aa).

The N-terminal stretch at 1–33 (MASAMRGEKCERSRIRELVLILSLITMAGDSRA) is a signal peptide. N-linked (GlcNAc...) asparagine glycosylation is found at asparagine 54, asparagine 62, asparagine 73, asparagine 116, and asparagine 144. The segment at 173–195 (NPGQTREHNPGQASTQPISTENP) is disordered. The segment covering 183–195 (GQASTQPISTENP) has biased composition (polar residues). N-linked (GlcNAc...) asparagine glycosylation occurs at asparagine 342. Positions 359-372 (FIESTTSNSPTIDN) are enriched in polar residues. The interval 359–474 (FIESTTSNSP…HHRIPAHKQE (116 aa)) is disordered. Composition is skewed to basic residues over residues 390 to 400 (LVHHRRHHHNH) and 437 to 474 (NHHRHRTGHHHPHHQLHQHHHHHHRHTKHHRIPAHKQE).

As to expression, synthesized in some glial cells and secreted.

The protein resides in the secreted. Functionally, negatively regulates proliferation of neuronal precursor cells, thereby controlling the timing of postembryonic neurogenesis. This Drosophila melanogaster (Fruit fly) protein is Protein anachronism (ana).